The primary structure comprises 505 residues: Cytochrome c oxidase subunit 1 (505 aa).

Residues 14 to 34 (LLYLVFAFFGGLLGTSLSMLI) form a helical membrane-spanning segment. Ca(2+)-binding residues include E37 and G42. 6 helical membrane passes run 55 to 75 (VIIT…ALFG), 98 to 118 (NISF…TLVE), 143 to 163 (AILS…NMLV), 180 to 200 (LFVW…PVLA), 229 to 249 (LFWF…FGIV), and 261 to 281 (VFGL…GFIV). H60 serves as a coordination point for Fe(II)-heme a. Cu cation contacts are provided by H235 and Y239. The segment at residues 235-239 (HPEVY) is a cross-link (1'-histidyl-3'-tyrosine (His-Tyr)). Y239 serves as a coordination point for O2. 2 residues coordinate Cu cation: H284 and H285. The next 2 helical transmembrane spans lie at 302–322 (ATMI…ATIY) and 332–352 (MWFA…GVVL). The Mg(2+) site is built by H362 and D363. H370 provides a ligand contact to heme a3. Residue H372 coordinates Fe(II)-heme a. Transmembrane regions (helical) follow at residues 374 to 394 (VLSM…GNLI), 408 to 428 (FWLL…LGLA), and 446 to 466 (AVSS…ATTF).

The protein belongs to the heme-copper respiratory oxidase family. Component of the cytochrome c oxidase (complex IV, CIV), a multisubunit enzyme composed of a catalytic core of 3 subunits and several supernumerary subunits. The complex exists as a monomer or a dimer and forms supercomplexes (SCs) in the inner mitochondrial membrane with ubiquinol-cytochrome c oxidoreductase (cytochrome b-c1 complex, complex III, CIII). Heme is required as a cofactor. The cofactor is Cu cation.

Its subcellular location is the mitochondrion inner membrane. The catalysed reaction is 4 Fe(II)-[cytochrome c] + O2 + 8 H(+)(in) = 4 Fe(III)-[cytochrome c] + 2 H2O + 4 H(+)(out). The protein operates within energy metabolism; oxidative phosphorylation. Functionally, component of the cytochrome c oxidase, the last enzyme in the mitochondrial electron transport chain which drives oxidative phosphorylation. The respiratory chain contains 3 multisubunit complexes succinate dehydrogenase (complex II, CII), ubiquinol-cytochrome c oxidoreductase (cytochrome b-c1 complex, complex III, CIII) and cytochrome c oxidase (complex IV, CIV), that cooperate to transfer electrons derived from NADH and succinate to molecular oxygen, creating an electrochemical gradient over the inner membrane that drives transmembrane transport and the ATP synthase. Cytochrome c oxidase is the component of the respiratory chain that catalyzes the reduction of oxygen to water. Electrons originating from reduced cytochrome c in the intermembrane space (IMS) are transferred via the dinuclear copper A center (CU(A)) of subunit 2 and heme A of subunit 1 to the active site in subunit 1, a binuclear center (BNC) formed by heme A3 and copper B (CU(B)). The BNC reduces molecular oxygen to 2 water molecules using 4 electrons from cytochrome c in the IMS and 4 protons from the mitochondrial matrix. In Chlamydomonas reinhardtii (Chlamydomonas smithii), this protein is Cytochrome c oxidase subunit 1 (COX1).